Here is a 173-residue protein sequence, read N- to C-terminus: Translation initiation factor IF-3 (173 aa).

This sequence belongs to the IF-3 family. Monomer.

It is found in the cytoplasm. IF-3 binds to the 30S ribosomal subunit and shifts the equilibrium between 70S ribosomes and their 50S and 30S subunits in favor of the free subunits, thus enhancing the availability of 30S subunits on which protein synthesis initiation begins. In Bacillus subtilis (strain 168), this protein is Translation initiation factor IF-3.